Reading from the N-terminus, the 140-residue chain is ATP synthase epsilon chain (140 aa).

It belongs to the ATPase epsilon chain family. As to quaternary structure, F-type ATPases have 2 components, CF(1) - the catalytic core - and CF(0) - the membrane proton channel. CF(1) has five subunits: alpha(3), beta(3), gamma(1), delta(1), epsilon(1). CF(0) has three main subunits: a, b and c.

Its subcellular location is the cell inner membrane. Its function is as follows. Produces ATP from ADP in the presence of a proton gradient across the membrane. This chain is ATP synthase epsilon chain, found in Pseudoalteromonas translucida (strain TAC 125).